A 5082-amino-acid polypeptide reads, in one-letter code: Malformin synthetase mlfA (5082 aa).

Positions 225–616 (ERHAANRPHS…CGRADTQVKL (392 aa)) are adenylation 1. The Carrier 1 domain occupies 749–822 (SRLEQKIQLA…EAASLAEVQE (74 aa)). Ser783 carries the post-translational modification O-(pantetheine 4'-phosphoryl)serine. The condensation 1 stretch occupies residues 860–1291 (ENVFPCTTMQ…ALNTLSLLQA (432 aa)). Residues 1319 to 1708 (DRWVTRQPEG…GRKDTQVKLR (390 aa)) are adenylation 2. Positions 1846 to 1923 (TPTLELERTL…QLAAEVGEPA (78 aa)) constitute a Carrier 2 domain. Ser1883 is subject to O-(pantetheine 4'-phosphoryl)serine. Disordered stretches follow at residues 1924–1953 (GQSA…DGVD) and 1986–2012 (GGSS…KKNA). Composition is skewed to low complexity over residues 1926 to 1950 (SASS…STND) and 1988 to 2005 (SSSN…SSSS). Positions 2058-2473 (EDIYPATALQ…AVSCSDKETL (416 aa)) are condensation 2. Residues 2496–2888 (RRTPHAPAVC…IGRRDGQLKL (393 aa)) are adenylation 3. Residues 3024 to 3100 (RPVTSQEHEM…QLICHLNTIR (77 aa)) enclose the Carrier 3 domain. An O-(pantetheine 4'-phosphoryl)serine modification is found at Ser3061. Condensation regions lie at residues 3117–3582 (WVAL…TYDQ) and 3603–4022 (NIYP…EHLV). An adenylation 4 region spans residues 4047 to 4426 (HNSRQAVFDD…VGRKDNQIKF (380 aa)). Residues 4560–4636 (MPSTAAERKM…DLSDQAKSLI (77 aa)) form the Carrier 4 domain. O-(pantetheine 4'-phosphoryl)serine is present on Ser4597. The condensation 5 stretch occupies residues 4673-5000 (DVLPTTSFQR…LQTIVQHQNN (328 aa)).

It belongs to the NRP synthetase family.

It functions in the pathway secondary metabolite biosynthesis. Nonribosomal peptide synthetase; part of the gene cluster that mediates the biosynthesis of malformins, cyclic pentapeptides with a disulfide bond between 2 consecutive cysteins, that show potential anti-tumor as well as antimalarial and antitrypanosomal properties. The nonribosomal peptide synthetase mlfA is responsible of the formation of the cyclic pentapeptide. The malformin biosynthesis clusters in malformin-producing fungi also contain enzymes involved in the formation of the disulfide bond between the two consecutive cysteins within malformins, in addition to additional tailoring enzymes such as methyltransferases or oxidoreductases. They are also composed of up to 4 major facilitator superfamily transporters, and transcription factors probably involved in the regulation of the expression of those clusters. The chain is Malformin synthetase mlfA from Aspergillus luchuensis (strain CBS 106.47).